Here is an 814-residue protein sequence, read N- to C-terminus: Probable G-protein coupled receptor 156 (814 aa).

The Extracellular portion of the chain corresponds to 1 to 47; sequence MEPEINCSELCDSFPGQELDRRPLHDLCKTTITSSHHSSKTISSLSP. N6 is a glycosylation site (N-linked (GlcNAc...) asparagine). The helical transmembrane segment at 48-68 threads the bilayer; sequence VLLGIVWTFLSCGLLLILFFL. The Cytoplasmic segment spans residues 69-86; that stretch reads AFTIHCRKNRIVKMSSPN. Residues 87–107 form a helical membrane-spanning segment; the sequence is LNIVTLLGSCLTYSSAYLFGI. The Extracellular segment spans residues 108–118; that stretch reads QDVLVGSSMET. Residues 119 to 139 form a helical membrane-spanning segment; it reads LIQTRLSMLCIGTSLVFGPIL. The Cytoplasmic portion of the chain corresponds to 140–164; it reads GKSWRLYKVFTQRVPDKRVIIKDLQ. The chain crosses the membrane as a helical span at residues 165 to 185; that stretch reads LLGLVAALLMADVILLMTWVL. Residues 186–222 are Extracellular-facing; the sequence is TDPIQCLQILSVSMTVTGKDVSCTSTSTHFCASRYSD. The chain crosses the membrane as a helical span at residues 223-243; sequence VWIALIWGCKGLLLLYGAYLA. Topologically, residues 244-257 are cytoplasmic; it reads GLTGHVSSPPVNQS. The chain crosses the membrane as a helical span at residues 258-278; it reads LTIMVGVNLLVLAAGLLFVVT. At 279-288 the chain is on the extracellular side; that stretch reads RYLHSWPNLV. Residues 289–309 form a helical membrane-spanning segment; the sequence is FGLTSGGIFVCTTTINCFIFI. The Cytoplasmic portion of the chain corresponds to 310 to 814; sequence PQLKQWKAFE…FKDDLKPTLV (505 aa). The stretch at 354–390 forms a coiled coil; it reads EKSSMERLLTEKNAVIESLQEQVNNAKEKIVRLMSAE. Disordered regions lie at residues 422 to 545, 557 to 724, and 769 to 792; these read AQGP…SSVI, GLGP…PEQW, and SSSDSSDSGTSDTDPEPTGGLASW. Residues 443-454 are compositionally biased toward polar residues; sequence SQCTSGPSSYAQ. Basic and acidic residues predominate over residues 468 to 484; the sequence is GKEEKISDSKDFSDHLD. Residues 486 to 496 are compositionally biased toward polar residues; it reads GCSQKPWTEQS. Positions 523–545 are enriched in basic and acidic residues; it reads QRQRHLENSEEPPERRSRVSSVI. Positions 563 to 581 are enriched in polar residues; it reads SLSTAPSCHQQTWKNSAAF. Positions 599 to 610 are enriched in basic residues; the sequence is VRRRRAAQRARS. Polar residues predominate over residues 639–651; sequence NGDSPSLAPQTTD. A compositionally biased stretch (low complexity) spans 769 to 780; it reads SSSDSSDSGTSD.

The protein belongs to the G-protein coupled receptor 3 family. GABA-B receptor subfamily. As to expression, ubiquitous expression both in the CNS and in peripheral tissues. Very high expression in fetal brain and testis relative to expression in other tissues.

The protein localises to the cell membrane. Functionally, orphan G-protein coupled receptor involved in the regulation of hair cell orientation in mechanosensory organs of the inner ear. It is required to trigger a 180 degree reversal in hair cell orientation, creating a virtual line of polarity reversal (LPR) across which stereociliary bundles are arranged in opposite orientations. The sequence is that of Probable G-protein coupled receptor 156 (GPR156) from Homo sapiens (Human).